A 310-amino-acid chain; its full sequence is Glucan endo-1,3-beta-glucosidase GI (310 aa).

Glu-96 acts as the Proton donor in catalysis. The Nucleophile role is filled by Glu-234.

Belongs to the glycosyl hydrolase 17 family. As to quaternary structure, monomer. As to expression, young leaves and roots.

It carries out the reaction Hydrolysis of (1-&gt;3)-beta-D-glucosidic linkages in (1-&gt;3)-beta-D-glucans.. Functionally, may provide a degree of protection against microbial invasion of germinated barley grain through its ability to degrade fungal cell wall polysaccharides. Does not hydrolyze (1,3;1,4)-beta-D-glucans, (1,6)-beta-D-glucan, CM-cellulose, insoluble (1,3)-beta-D-glucans or aryl beta-D-glycosides. In Hordeum vulgare (Barley), this protein is Glucan endo-1,3-beta-glucosidase GI.